The primary structure comprises 212 residues: Thiamine-phosphate synthase (212 aa).

Q38–K42 serves as a coordination point for 4-amino-2-methyl-5-(diphosphooxymethyl)pyrimidine. 2 residues coordinate Mg(2+): D71 and D90. K138 is a binding site for 4-amino-2-methyl-5-(diphosphooxymethyl)pyrimidine. Residue G166 participates in 2-[(2R,5Z)-2-carboxy-4-methylthiazol-5(2H)-ylidene]ethyl phosphate binding.

Belongs to the thiamine-phosphate synthase family. It depends on Mg(2+) as a cofactor.

The enzyme catalyses 2-[(2R,5Z)-2-carboxy-4-methylthiazol-5(2H)-ylidene]ethyl phosphate + 4-amino-2-methyl-5-(diphosphooxymethyl)pyrimidine + 2 H(+) = thiamine phosphate + CO2 + diphosphate. It carries out the reaction 2-(2-carboxy-4-methylthiazol-5-yl)ethyl phosphate + 4-amino-2-methyl-5-(diphosphooxymethyl)pyrimidine + 2 H(+) = thiamine phosphate + CO2 + diphosphate. It catalyses the reaction 4-methyl-5-(2-phosphooxyethyl)-thiazole + 4-amino-2-methyl-5-(diphosphooxymethyl)pyrimidine + H(+) = thiamine phosphate + diphosphate. Its pathway is cofactor biosynthesis; thiamine diphosphate biosynthesis; thiamine phosphate from 4-amino-2-methyl-5-diphosphomethylpyrimidine and 4-methyl-5-(2-phosphoethyl)-thiazole: step 1/1. In terms of biological role, condenses 4-methyl-5-(beta-hydroxyethyl)thiazole monophosphate (THZ-P) and 2-methyl-4-amino-5-hydroxymethyl pyrimidine pyrophosphate (HMP-PP) to form thiamine monophosphate (TMP). The sequence is that of Thiamine-phosphate synthase from Chlamydia abortus (strain DSM 27085 / S26/3) (Chlamydophila abortus).